Reading from the N-terminus, the 326-residue chain is MSQVVVCALYKFVSLPHFESIQKPLLALMEESGVKGTLLLASEGINGTVAGSQAAIDSLLMWLYQQPGLDNIVHKRSFDEQMPFYRTKVKLKKEIVTMGVEGIDPLKVVGTYVKPRDWNKLISDPDVLLVDTRNEYEIQIGTFKNAVDPKTDTFREFPAYVKDNLDPAKHKKVAMFCTGGIRCEKSTAYLKEQGFDEVYHLEGGVLKYLEEVKQEESLWEGECFVFDNRVAVNHNLEKGQYDQCNACRMPITETEKASEAYVQGVSCPHCIDSTSDKQRRRFEERERQMLLAAKRGEAHIGSDVSQVILSRRTEKEDQRQAQNKKA.

Residues 123–217 (SDPDVLLVDT…YLEEVKQEES (95 aa)) form the Rhodanese domain. C177 functions as the Cysteine persulfide intermediate in the catalytic mechanism. A disordered region spans residues 304–326 (VSQVILSRRTEKEDQRQAQNKKA).

The protein belongs to the TrhO family.

It carries out the reaction uridine(34) in tRNA + AH2 + O2 = 5-hydroxyuridine(34) in tRNA + A + H2O. Catalyzes oxygen-dependent 5-hydroxyuridine (ho5U) modification at position 34 in tRNAs. The polypeptide is tRNA uridine(34) hydroxylase (Shewanella sediminis (strain HAW-EB3)).